The following is a 389-amino-acid chain: Dihydroorotase (389 aa).

2 residues coordinate Zn(2+): His-51 and His-53. Substrate is bound by residues 53 to 55 (HVR) and Asn-85. Residues Lys-133, His-158, His-193, and Asp-256 each contribute to the Zn(2+) site. The residue at position 133 (Lys-133) is an N6-carboxylysine. Asp-256 is an active-site residue. Residues His-260 and 274 to 275 (PG) contribute to the substrate site.

Belongs to the metallo-dependent hydrolases superfamily. DHOase family. Class I DHOase subfamily. The cofactor is Zn(2+).

It catalyses the reaction (S)-dihydroorotate + H2O = N-carbamoyl-L-aspartate + H(+). It participates in pyrimidine metabolism; UMP biosynthesis via de novo pathway; (S)-dihydroorotate from bicarbonate: step 3/3. Functionally, catalyzes the reversible cyclization of carbamoyl aspartate to dihydroorotate. The protein is Dihydroorotase of Sulfolobus acidocaldarius (strain ATCC 33909 / DSM 639 / JCM 8929 / NBRC 15157 / NCIMB 11770).